Here is a 275-residue protein sequence, read N- to C-terminus: LIM/homeobox protein Awh (275 aa).

2 LIM zinc-binding domains span residues 6–67 and 68–129; these read RSCA…NFGA and KCSK…TVEG. T126 is subject to Phosphothreonine. Residues 148 to 207 constitute a DNA-binding region (homeobox); the sequence is TKRVRTTFTEEQLQVLQANFQIDSNPDGQDLERIASVTGLSKRVTQVWFQNSRARQKKHI. The interval 253 to 275 is disordered; the sequence is PTHESSMDELSQDSSVHCMPSEV.

As to expression, first detected in neuroblasts in stage 9 embryos. Expressed in all 10 abdominal segments and in the labial segment during early embryogenesis. Expressed in the stage 14 developing epithelium. By embryonic stage 16, expression is refined to the abdominal histoblasts and salivary gland imaginal ring cells. Expressed in both larval and imaginal cells between the salivary gland and the salivary gland imaginal ring, in late third instar larvae. Also expressed in specific areas of the larval wing, leg and eye-antennal disks.

The protein resides in the nucleus. Its function is as follows. Probable transcription factor. Required for the establishment of a subset of imaginal tissues: the abdominal histoblasts and the salivary gland imaginal rings. The chain is LIM/homeobox protein Awh from Drosophila melanogaster (Fruit fly).